Consider the following 188-residue polypeptide: Crossover junction endodeoxyribonuclease RuvC (188 aa).

Residues Asp-7, Glu-68, and Asp-141 contribute to the active site. Mg(2+) contacts are provided by Asp-7, Glu-68, and Asp-141.

This sequence belongs to the RuvC family. As to quaternary structure, homodimer which binds Holliday junction (HJ) DNA. The HJ becomes 2-fold symmetrical on binding to RuvC with unstacked arms; it has a different conformation from HJ DNA in complex with RuvA. In the full resolvosome a probable DNA-RuvA(4)-RuvB(12)-RuvC(2) complex forms which resolves the HJ. It depends on Mg(2+) as a cofactor.

It is found in the cytoplasm. The catalysed reaction is Endonucleolytic cleavage at a junction such as a reciprocal single-stranded crossover between two homologous DNA duplexes (Holliday junction).. In terms of biological role, the RuvA-RuvB-RuvC complex processes Holliday junction (HJ) DNA during genetic recombination and DNA repair. Endonuclease that resolves HJ intermediates. Cleaves cruciform DNA by making single-stranded nicks across the HJ at symmetrical positions within the homologous arms, yielding a 5'-phosphate and a 3'-hydroxyl group; requires a central core of homology in the junction. The consensus cleavage sequence is 5'-(A/T)TT(C/G)-3'. Cleavage occurs on the 3'-side of the TT dinucleotide at the point of strand exchange. HJ branch migration catalyzed by RuvA-RuvB allows RuvC to scan DNA until it finds its consensus sequence, where it cleaves and resolves the cruciform DNA. This chain is Crossover junction endodeoxyribonuclease RuvC, found in Streptomyces coelicolor (strain ATCC BAA-471 / A3(2) / M145).